A 358-amino-acid chain; its full sequence is tRNA-specific 2-thiouridylase MnmA (358 aa).

Residues 8-15 (AMSGGVDS) and Met-35 contribute to the ATP site. The interval 95–97 (NPD) is interaction with target base in tRNA. Cys-100 (nucleophile) is an active-site residue. A disulfide bridge connects residues Cys-100 and Cys-194. Gly-124 contributes to the ATP binding site. The interaction with tRNA stretch occupies residues 144-146 (KDQ). The active-site Cysteine persulfide intermediate is the Cys-194. Residues 301-302 (RY) form an interaction with tRNA region.

It belongs to the MnmA/TRMU family.

The protein localises to the cytoplasm. It carries out the reaction S-sulfanyl-L-cysteinyl-[protein] + uridine(34) in tRNA + AH2 + ATP = 2-thiouridine(34) in tRNA + L-cysteinyl-[protein] + A + AMP + diphosphate + H(+). Its function is as follows. Catalyzes the 2-thiolation of uridine at the wobble position (U34) of tRNA, leading to the formation of s(2)U34. The protein is tRNA-specific 2-thiouridylase MnmA of Chlamydia trachomatis serovar D (strain ATCC VR-885 / DSM 19411 / UW-3/Cx).